The primary structure comprises 525 residues: Nuclear pore glycoprotein p62 (525 aa).

At Ser-2 the chain carries N-acetylserine. 5 consecutive repeat copies span residues 6–7, 46–47, 78–79, 115–116, and 143–144. Positions 6-144 are 5 X 2 AA repeats of F-G; sequence FGGTGAPAGG…GTAPTGFVFG (139 aa). Positions 260 to 293 are disordered; that stretch reads LKAPGAAPGASTTSTTTTTTTTTTTASTSSSTTT. Low complexity predominate over residues 269–293; it reads ASTTSTTTTTTTTTTTASTSSSTTT. The segment at 331 to 461 is required for centrosome localization; the sequence is MTYAQLESLI…QDLKDIIEHL (131 aa). Positions 331–461 form a coiled coil; it reads MTYAQLESLI…QDLKDIIEHL (131 aa). A phosphoserine mark is found at Ser-411 and Ser-421. Residue Ser-471 is glycosylated (O-linked (GlcNAc) serine).

Belongs to the nucleoporin NSP1/NUP62 family. In terms of assembly, component of the p62 complex, a complex at least composed of NUP62, NUP54, and NUP58. Interacts with NUP88. Interacts with NUTF2. Interacts with HIKESHI. Interacts with OSBPL8. Interacts with CAPG. Interacts with SAS6 and TUBG1 at the centrosome. Interacts with MCM3AP. In terms of processing, the inner channel of the NPC has a different redox environment from the cytoplasm and allows the formation of interchain disulfide bonds between some nucleoporins, the significant increase of these linkages upon oxidative stress reduces the permeability of the NPC.

It is found in the nucleus. Its subcellular location is the nuclear pore complex. The protein resides in the cytoplasm. It localises to the cytoskeleton. The protein localises to the spindle pole. It is found in the nucleus envelope. Its subcellular location is the microtubule organizing center. The protein resides in the centrosome. Essential component of the nuclear pore complex. The N-terminal is probably involved in nucleocytoplasmic transport. The C-terminal is involved in protein-protein interaction probably via coiled-coil formation, promotes its association with centrosomes and may function in anchorage of p62 to the pore complex. Plays a role in mitotic cell cycle progression by regulating centrosome segregation, centriole maturation and spindle orientation. It might be involved in protein recruitment to the centrosome after nuclear breakdown. The chain is Nuclear pore glycoprotein p62 (Nup62) from Rattus norvegicus (Rat).